The primary structure comprises 783 residues: Protein DWD HYPERSENSITIVE TO UV-B 1 (783 aa).

WD repeat units lie at residues 145–198 (GEFT…LKLP) and 212–256 (SDSS…DPSL). A Nuclear localization signal motif is present at residues 382-389 (RKKESVVR). WD repeat units follow at residues 439-480 (DNSR…IFRY), 485-525 (GSQS…STVT), 538-577 (DEFD…RLQV), 581-621 (MHQE…SRPC), 625-664 (SSTK…LHLN), and 666-710 (EIVP…RRLR).

In terms of assembly, interacts directly with DDB1A. Binds to COP1 and RUP1.

The protein resides in the nucleus. Functionally, may act as a substrate receptor of a CUL4-RING E3 ubiquitin-protein ligase (CRL4) complex involved in the negative regulation of cellular responses to ultraviolet-B (UV-B) illumination, likely in coordination with RUP1. Interacts with COP1 and probably prevents the formation of active UVR8-COP1 complex, thus avoiding UVR8-COP1-mediated positive regulation of UV-B responses. The polypeptide is Protein DWD HYPERSENSITIVE TO UV-B 1 (Arabidopsis thaliana (Mouse-ear cress)).